Consider the following 376-residue polypeptide: MAFVPFQAPQGSTIAVGMSGGVDSSVTAYLLKKQGYDVFGIFMKNWEETFSSGYCSAAEDLEDARDVCQTLDIPLHTVNFVQQYHDRVFQLFLDEYRAGRTPNPDVLCNREIKFAELALYAQQLGADFLATGHYAQRLQSDNHEAALFKGVDAQKDQSYFLHQITPAQLNKAIFPLGGLQKKQVRAIARERGLTTFDKKDSTGICFIGERPFRAFLQQYLPAQKGLMKTPNGEIVGEHMGLMYYTIGQRQGLGIGGIAGASEEPWYVLEKDLSNNVLIVGQGDHPLLYHRVLIAGQLSWLNEAPIAGRFYHAKTRYRQSDQKCRVDYAADGRLQLTFEQLQRAITLGQYAVIYDGERCLGGGVIEARMQGKQDVSS.

Residues 17-24 (GMSGGVDS) and methionine 43 each bind ATP. The interval 103 to 105 (NPD) is interaction with target base in tRNA. Catalysis depends on cysteine 108, which acts as the Nucleophile. The cysteines at positions 108 and 205 are disulfide-linked. ATP is bound at residue glycine 132. The tract at residues 155–157 (KDQ) is interaction with tRNA. Catalysis depends on cysteine 205, which acts as the Cysteine persulfide intermediate. Residues 315 to 316 (RY) are interaction with tRNA.

The protein belongs to the MnmA/TRMU family.

The protein localises to the cytoplasm. The enzyme catalyses S-sulfanyl-L-cysteinyl-[protein] + uridine(34) in tRNA + AH2 + ATP = 2-thiouridine(34) in tRNA + L-cysteinyl-[protein] + A + AMP + diphosphate + H(+). In terms of biological role, catalyzes the 2-thiolation of uridine at the wobble position (U34) of tRNA, leading to the formation of s(2)U34. In Dichelobacter nodosus (strain VCS1703A), this protein is tRNA-specific 2-thiouridylase MnmA.